The chain runs to 541 residues: Transmembrane protein 87A (541 aa).

The signal sequence occupies residues methionine 1–alanine 26. Residues valine 27–proline 209 lie on the Lumenal side of the membrane. N-linked (GlcNAc...) asparagine glycans are attached at residues asparagine 52, asparagine 109, asparagine 148, and asparagine 189. Disulfide bonds link cysteine 65–cysteine 116 and cysteine 82–cysteine 416. The helical transmembrane segment at leucine 210–isoleucine 230 threads the bilayer. Residues tryptophan 231–arginine 241 are Cytoplasmic-facing. Residues isoleucine 242 to alanine 262 traverse the membrane as a helical segment. Over glutamate 263–arginine 293 the chain is Lumenal. The helical transmembrane segment at leucine 294–methionine 314 threads the bilayer. Over histidine 315–arginine 316 the chain is Cytoplasmic. A helical membrane pass occupies residues valine 317–isoleucine 337. The Lumenal portion of the chain corresponds to glycine 338–leucine 344. The helical transmembrane segment at valine 345–valine 365 threads the bilayer. The Cytoplasmic segment spans residues serine 366 to serine 384. A helical membrane pass occupies residues leucine 385–isoleucine 405. Topologically, residues tryptophan 406–glutamate 422 are lumenal. Residues leucine 423 to phenylalanine 443 traverse the membrane as a helical segment. At leucine 444–glutamate 541 the chain is on the cytoplasmic side.

The protein belongs to the LU7TM family. TMEM87 subfamily.

Its subcellular location is the cell membrane. It is found in the golgi apparatus membrane. Potential monoatomic ion channel gated by mechanical force, implicated in normal touch sensitivity through the generation of mechanically activated currents. However, a direct channel activity is debated and an alternative could be that it functions as a chaperone for an unidentified mechanosensitive ion channel. Could also be involved in cell mechanosensitivity regulating cell adhesion and migration. May also be involved in retrograde transport from endosomes to the trans-Golgi network (TGN). The polypeptide is Transmembrane protein 87A (Xenopus tropicalis (Western clawed frog)).